The primary structure comprises 121 residues: Small ribosomal subunit protein uS13 (121 aa).

A disordered region spans residues 91 to 121 (HKRGLPVRGQRTRTNARTRKGPRRAAASLKK).

The protein belongs to the universal ribosomal protein uS13 family. In terms of assembly, part of the 30S ribosomal subunit. Forms a loose heterodimer with protein S19. Forms two bridges to the 50S subunit in the 70S ribosome.

Its function is as follows. Located at the top of the head of the 30S subunit, it contacts several helices of the 16S rRNA. In the 70S ribosome it contacts the 23S rRNA (bridge B1a) and protein L5 of the 50S subunit (bridge B1b), connecting the 2 subunits; these bridges are implicated in subunit movement. Contacts the tRNAs in the A and P-sites. In Bordetella petrii (strain ATCC BAA-461 / DSM 12804 / CCUG 43448), this protein is Small ribosomal subunit protein uS13.